Consider the following 260-residue polypeptide: ATP synthase subunit a (260 aa).

A run of 6 helical transmembrane segments spans residues 37–57, 95–115, 125–145, 154–174, 191–211, and 233–253; these read FTNASLWMVVTVVAIGLFMTL, FFPFIFSLFMFIFFANMIGMF, IVVTFALAIVVFLGVTLTGFV, VFVPSGVPMALLPLVVAIEII, MLAGHIMLKVFAGFVLTFMTM, and EFLVAALQAYVFTILTCMYLH.

Belongs to the ATPase A chain family. As to quaternary structure, F-type ATPases have 2 components, CF(1) - the catalytic core - and CF(0) - the membrane proton channel. CF(1) has five subunits: alpha(3), beta(3), gamma(1), delta(1), epsilon(1). CF(0) has three main subunits: a(1), b(2) and c(9-12). The alpha and beta chains form an alternating ring which encloses part of the gamma chain. CF(1) is attached to CF(0) by a central stalk formed by the gamma and epsilon chains, while a peripheral stalk is formed by the delta and b chains.

The protein localises to the cell inner membrane. In terms of biological role, key component of the proton channel; it plays a direct role in the translocation of protons across the membrane. The sequence is that of ATP synthase subunit a from Parvibaculum lavamentivorans (strain DS-1 / DSM 13023 / NCIMB 13966).